We begin with the raw amino-acid sequence, 355 residues long: Electron transfer flavoprotein subunit alpha, mitochondrial (355 aa).

FAD is bound at residue 295-323 (LYIAVGISGAIQHLAGMKDSKVIVAINKD).

This sequence belongs to the ETF alpha-subunit/FixB family. Heterodimer of an alpha and a beta subunit. It depends on FAD as a cofactor.

It localises to the mitochondrion matrix. Its function is as follows. The electron transfer flavoprotein serves as a specific electron acceptor for several dehydrogenases, including five acyl-CoA dehydrogenases, glutaryl-CoA and sarcosine dehydrogenase. It transfers the electrons to the main mitochondrial respiratory chain via ETF-ubiquinone oxidoreductase (ETF dehydrogenase). The sequence is that of Electron transfer flavoprotein subunit alpha, mitochondrial (etfa) from Dictyostelium discoideum (Social amoeba).